The sequence spans 145 residues: MIALIQRVTRASVTVEGEVTGEIGQGLLVLLGVERDDDEQKANRLCERVLGYRIFSDAEGKMNLNVQQAGGSVLVVSQFTLAADTERGMRPGFSRGAAPDRAEALYEYFVERCCQQEMNTQTGRFAADMQVSLVNDGPVTFWLQV.

Positions 137–138 (GP) match the Gly-cisPro motif, important for rejection of L-amino acids motif.

Belongs to the DTD family. As to quaternary structure, homodimer.

Its subcellular location is the cytoplasm. The catalysed reaction is glycyl-tRNA(Ala) + H2O = tRNA(Ala) + glycine + H(+). It carries out the reaction a D-aminoacyl-tRNA + H2O = a tRNA + a D-alpha-amino acid + H(+). Functionally, an aminoacyl-tRNA editing enzyme that deacylates mischarged D-aminoacyl-tRNAs. Also deacylates mischarged glycyl-tRNA(Ala), protecting cells against glycine mischarging by AlaRS. Acts via tRNA-based rather than protein-based catalysis; rejects L-amino acids rather than detecting D-amino acids in the active site. By recycling D-aminoacyl-tRNA to D-amino acids and free tRNA molecules, this enzyme counteracts the toxicity associated with the formation of D-aminoacyl-tRNA entities in vivo and helps enforce protein L-homochirality. This Citrobacter koseri (strain ATCC BAA-895 / CDC 4225-83 / SGSC4696) protein is D-aminoacyl-tRNA deacylase.